Here is a 306-residue protein sequence, read N- to C-terminus: Probable rRNA-processing protein EBP2 (306 aa).

Position 1 is an N-acetylmethionine (Met1). Disordered stretches follow at residues 1-20 (MDTP…LVTD) and 77-99 (VPEI…VDPE). Thr3 is subject to Phosphothreonine. Phosphoserine occurs at positions 7, 9, 11, 13, and 16. Lys94 is covalently cross-linked (Glycyl lysine isopeptide (Lys-Gly) (interchain with G-Cter in SUMO2)). A coiled-coil region spans residues 138–169 (AEMAKSDLQMQKIRQKLQTKQAAMERSEKAKQ). Residues Lys179 and Lys218 each participate in a glycyl lysine isopeptide (Lys-Gly) (interchain with G-Cter in SUMO2) cross-link. The tract at residues 213–306 (LEGDQKPLAQ…TREKMKNRTH (94 aa)) is disordered. Phosphoserine is present on residues Ser264 and Ser270. Over residues 274–306 (KTAHGRGLKRPGKKGSNKRPGKRTREKMKNRTH) the composition is skewed to basic residues.

This sequence belongs to the EBP2 family. Specifically interacts with EBV EBNA1. The EBNA1-EBP2 interaction is important for the stable segregation of EBV episomes during cell division. Interacts with WDR46. As to expression, ubiquitous.

It is found in the nucleus. Its subcellular location is the nucleolus. Functionally, required for the processing of the 27S pre-rRNA. The protein is Probable rRNA-processing protein EBP2 (EBNA1BP2) of Homo sapiens (Human).